The sequence spans 2188 residues: MSAAQGLALKLRAAPAAGGVRGEKRRRAASATAAAAARPRHGAMSLEGGFLGGALPAEDRVAPRASASRQAEAGAGAGAARPPPRSMSKIPESSIGLYDPSMERDSCGVGFIAELSGEYSRKTVDDAIEMLDRMAHRGACGCEKNTGDGAGILVALPHNFFREVTKDAGFELPPPGEYAVGMFFMPTDDKRREKSKLLFREKAELLGHTVLGWRRVPTDNSGLGQSAVDTEPVIEQVFVTKSASSKADFERQMYVLRRFSVMSIREVLGVKNGGTKDFYMCSLSSRTIVYKGQLKPSQLKGYFFADLGDESFTSYMALIHSRFSTNTFPSWDRAQPMRVLGHNGEINTLRGNKNWMKAREGLLKCEGLGLTRDEMLKLLPIVDATSSDSGAIDNVLELLIQSGRSAPEAVMMMIPEAWQNDVNMDPERKALYEFFSALMEPWDGPALISFTDGRYLGATLDRNGLRPGRFYVTYSGRVIMASEVGVVDVPPQDVSRKGRLNPGMMLLVDFENHCVVNDDELKKEYSKVRPYGEWLKRQRIQLTDIIESVNEAERIAPSISGALPITKENKADMGICGILTPLKAFGYTREALEMLMLPMAKDGQEALGSMGNDTPLAVMSNREKLTFEYFKQMFAQVTNPPIDPIREKIVTSMECMIGPEGDLSETTERQCHRLTLKSPLLNTNEMEAIKKMNYRGWRSKVLDITYPKKNGRMGLKQTLDKICAQAREAIHEGYTILVLSDRGFSSERVAVSSLLAVGAVHQHLVSHLERTRIGLLVESAEPREVHHFSTLIGFGADAICPYLAIEAIWRLQIDGRIPPNDGKPYTQEQLIEKYFYASNYGMMKVLAKMGISTLASYKGAQIFEALGLASEVVSKCFEGTPSRVEGATFEMLAQDALRLHEIAFPSRTLPPGSADANALPNPGDYHWRKNGEVHLNDPFSIAKLQEAARINSREAYKEYSRRIYELNKACTLRGMLKFREIPNQISLDEVEPAKEIVKRFCTGAMSYGSISLEAHTSLAEAMNTLGGKSNTGEGGEQPCRMVPLPDGSKNPRISAIKQVASGRFGVSIYYLTNAVEVQIKMAQGAKPGEGGELPGHKVIGDIAVTRNSTAGVGLISPPPHHDIYSIEDLAQLIHDLKNANPGARISVKLVSEAGVGIVASGVVKGHADHVLISGHDGGTGASRWTGIKNAGLPWELGLAETHQTLVANGLRGRAVLQTDGQMKTGRDVAVACLLGAEEFGFSTAPLITLGCIMMRKCHTNTCPAGIATQDPVLRAKFAGKPEHVINYFFMLAEEVREIMAQLGFRTVNEMVGRSDMLEIDPKVLEGNEKLENIDLSRLLKPAAEISPGAVQYCVEKQDHGLDMALDNKLIASSTAALRKGVRVFIETPVRNINRAVGTMLSHEVTKRYHIHGLPSDTIHIKLNGSAGQSFGAFLCPGITLELEGDSNDYVGKGLSGGKIVVYPPRNSRFNPQDNIVIGNVALYGATKGEAYFNGMAAERFCVRNSGAQAVVEGIGDHGCEYMTGGTAVILGKTGRNFAAGMSGGIAYVYDVDGKFSSRCNYELVDLYAVVEEDDITTLRMMIQQHRLHTQSDLARDILLNFDTLLPKFIKVYPRDYKRVLDKLKEEKAAKEAEQKAREVVDKKPVEVIQAPNGISVKTEKVMNEEPSSRPSRVSNAVKYRGFIKYEREGTSYRDPNERVKDWNEVAIELVPGPLLKTQSARCMDCGTPFCHQEGSGAGCPLGNKIPEFNELVHQNRWHEALDRLLETNNFPEFTGRVCPAPCEGSCVLGIIDNPVSIKSIECAIIDKGFEEGWMVPRPPLRRTGKRVAIVGSGPAGLAAADQLNKMGHFVTVFERADRIGGLMMYGVPNMKADKEGIVQRRVELMAKEGVQFIVNAHVGSDPLYSVEKLRSENDAIILACGATKPKDLPIPGRELAGIHFAMEFLHANTKSLLDSNLEDGNYISAQGRKVVVIGGGDTGTDCIGTSIRHGCTNLVNLELLPEPPRKRAPDNPWPQWPRIFRVDYGHQEATSKFGKDPRSYKVLTKRFIGDENGNVKALEVIRVEWGKVNGRFQFKEVEGSEEIIEADLVLLAMGFLGPEATVANKLGLEQDMRSNFKAQFGNFATNVEGVFAAGDCRRGQSLVVWAITEGRQAAAAVDNYLSKDDEGETNGTEDIAVSSEGLVQPVVA.

The transit peptide at 1-30 (MSAAQGLALKLRAAPAAGGVRGEKRRRAAS) directs the protein to the chloroplast. Disordered regions lie at residues 14-40 (APAA…ARPR) and 61-94 (VAPR…PESS). Low complexity predominate over residues 65–80 (ASASRQAEAGAGAGAA). Catalysis depends on Cys107, which acts as the Nucleophile. The Glutamine amidotransferase type-2 domain maps to 107–511 (CGVGFIAELS…PGMMLLVDFE (405 aa)). 1198 to 1255 (LAETHQTLVANGLRGRAVLQTDGQMKTGRDVAVACLLGAEEFGFSTAPLITLGCIMMR) is an FMN binding site. Positions 1251, 1257, and 1262 each coordinate [3Fe-4S] cluster. 1974–1988 (GGGDTGTDCIGTSIR) contributes to the NAD(+) binding site.

This sequence belongs to the glutamate synthase family. As to quaternary structure, monomer. The cofactor is [3Fe-4S] cluster. FAD serves as cofactor. It depends on FMN as a cofactor. As to expression, expressed in leaf blades and sheaths.

It is found in the plastid. The protein localises to the chloroplast. The catalysed reaction is 2 L-glutamate + NAD(+) = L-glutamine + 2-oxoglutarate + NADH + H(+). The protein operates within amino-acid biosynthesis; L-glutamate biosynthesis via GLT pathway; L-glutamate from 2-oxoglutarate and L-glutamine (NAD(+) route): step 1/1. Its pathway is energy metabolism; nitrogen metabolism. Involved in glutamate biosynthesis. The protein is Glutamate synthase 2 [NADH], chloroplastic of Oryza sativa subsp. japonica (Rice).